The sequence spans 524 residues: Probable glutamyl-tRNA reductase 3, chloroplastic (524 aa).

The N-terminal 52 residues, 1-52, are a transit peptide targeting the chloroplast; that stretch reads MAVSNASVVLSPNLETSSSWYHHNPSSSLDLIRIHTLPMNKMTRRGLIQRVR. Substrate contacts are provided by residues 129–132, S189, 194–196, and Q200; these read TCNR and ENQ. Catalysis depends on C130, which acts as the Nucleophile. 269-274 lines the NADP(+) pocket; it reads GAGEMG.

The protein belongs to the glutamyl-tRNA reductase family.

It is found in the plastid. It localises to the chloroplast. It catalyses the reaction (S)-4-amino-5-oxopentanoate + tRNA(Glu) + NADP(+) = L-glutamyl-tRNA(Glu) + NADPH + H(+). It functions in the pathway porphyrin-containing compound metabolism; protoporphyrin-IX biosynthesis; 5-aminolevulinate from L-glutamyl-tRNA(Glu): step 1/2. Its pathway is porphyrin-containing compound metabolism; chlorophyll biosynthesis. Functionally, catalyzes the NADPH-dependent reduction of glutamyl-tRNA(Glu) to glutamate 1-semialdehyde (GSA). The chain is Probable glutamyl-tRNA reductase 3, chloroplastic (HEMA3) from Arabidopsis thaliana (Mouse-ear cress).